The primary structure comprises 257 residues: Pimeloyl-[acyl-carrier protein] methyl ester esterase (257 aa).

Residues 15-241 (HLVLLHGWGL…KAAHAPFVSH (227 aa)) form the AB hydrolase-1 domain. Substrate is bound by residues Trp-22, 82–83 (SL), and 143–147 (FLALQ). Ser-82 functions as the Nucleophile in the catalytic mechanism. Catalysis depends on residues Asp-207 and His-235. Residue His-235 coordinates substrate.

It belongs to the AB hydrolase superfamily. Carboxylesterase BioH family. Monomer.

Its subcellular location is the cytoplasm. It catalyses the reaction 6-carboxyhexanoyl-[ACP] methyl ester + H2O = 6-carboxyhexanoyl-[ACP] + methanol + H(+). It participates in cofactor biosynthesis; biotin biosynthesis. The physiological role of BioH is to remove the methyl group introduced by BioC when the pimeloyl moiety is complete. It allows to synthesize pimeloyl-ACP via the fatty acid synthetic pathway through the hydrolysis of the ester bonds of pimeloyl-ACP esters. This chain is Pimeloyl-[acyl-carrier protein] methyl ester esterase, found in Klebsiella pneumoniae (strain 342).